The sequence spans 495 residues: ATP synthase subunit beta, chloroplastic (495 aa).

Gly172–Thr179 is an ATP binding site.

This sequence belongs to the ATPase alpha/beta chains family. F-type ATPases have 2 components, CF(1) - the catalytic core - and CF(0) - the membrane proton channel. CF(1) has five subunits: alpha(3), beta(3), gamma(1), delta(1), epsilon(1). CF(0) has four main subunits: a(1), b(1), b'(1) and c(9-12).

The protein resides in the plastid. It localises to the chloroplast thylakoid membrane. It catalyses the reaction ATP + H2O + 4 H(+)(in) = ADP + phosphate + 5 H(+)(out). Produces ATP from ADP in the presence of a proton gradient across the membrane. The catalytic sites are hosted primarily by the beta subunits. The polypeptide is ATP synthase subunit beta, chloroplastic (Beaucarnea recurvata (Elephant-foot tree)).